We begin with the raw amino-acid sequence, 164 residues long: MKNFASIKDEIQKIAESILKEYNLQIYEINNFFDFESDVLQILVEDITEPNKALDFDSIISSNEKLSDALENFPGLSEPYMLEVASAGIEKPIRSKDELVKAVNSYIHVELNQEKNTSSEIEGILLDFDVNKDTFRITYFLKGQKKKVDFKYEQVKFARYAVKF.

It belongs to the RimP family.

The protein resides in the cytoplasm. In terms of biological role, required for maturation of 30S ribosomal subunits. The protein is Ribosome maturation factor RimP of Mesoplasma florum (strain ATCC 33453 / NBRC 100688 / NCTC 11704 / L1) (Acholeplasma florum).